A 172-amino-acid polypeptide reads, in one-letter code: Pre-intermoult gene 1 protein (172 aa).

The signal sequence occupies residues 1-22; it reads MKLTKLWLLFVCLGLFVTLVVS. Positions 25 to 45 are enriched in acidic residues; it reads TDSDADSDSSADSDSSADSDE. Residues 25–172 are disordered; the sequence is TDSDADSDSS…RRNNNSRRRG (148 aa). 3 consecutive repeat copies span residues 27–32, 33–38, and 39–44. Positions 27–44 are 3 X 6 AA tandem repeats of S-S-A-D-S-D; sequence SDADSDSSADSDSSADSD. Residues 55–77 show a composition bias toward low complexity; the sequence is TSTTESSATNSSGSSDDASGSSS. Residues 78-95 show a composition bias toward acidic residues; sequence DVDDGSDDDTDSGSDTDY. Residues 104–172 are compositionally biased toward basic residues; it reads VKKRANRKKA…RRNNNSRRRG (69 aa).

As to expression, low expression in first to third instar larvae salivary glands.

The sequence is that of Pre-intermoult gene 1 protein (Pig1) from Drosophila melanogaster (Fruit fly).